The sequence spans 277 residues: MKRPVDFFAMKENGEKITMITAYDYPSAKNVEQAEADMILVGDSLGMVVLGYDSTVPVTMDDMIHHTKAVKRGAPDTFVVTDMPFMTYHGSVDETIQNARKIIQESGAHAVKLEGAGEVVNKIARLTEAGAPVVAHLGLTPQSVGLTGSYKVRAKSAQEAQELMDNALAVEAAGAIALVLEAIPRQLAEKVSKALSIPTIGIGAGVETDGQVLVYHDIIGYGISRRAKFVKAYADIDERIEPALASYVKEVKAATFPEVKHSFTMAEEDLKGLYGRE.

Mg(2+)-binding residues include D43 and D82. Residues 43–44, D82, and K112 each bind 3-methyl-2-oxobutanoate; that span reads DS. Mg(2+) is bound at residue E114. The active-site Proton acceptor is E181.

This sequence belongs to the PanB family. In terms of assembly, homodecamer; pentamer of dimers. Requires Mg(2+) as cofactor.

It localises to the cytoplasm. The catalysed reaction is 3-methyl-2-oxobutanoate + (6R)-5,10-methylene-5,6,7,8-tetrahydrofolate + H2O = 2-dehydropantoate + (6S)-5,6,7,8-tetrahydrofolate. Its pathway is cofactor biosynthesis; (R)-pantothenate biosynthesis; (R)-pantoate from 3-methyl-2-oxobutanoate: step 1/2. Its function is as follows. Catalyzes the reversible reaction in which hydroxymethyl group from 5,10-methylenetetrahydrofolate is transferred onto alpha-ketoisovalerate to form ketopantoate. This chain is 3-methyl-2-oxobutanoate hydroxymethyltransferase, found in Listeria monocytogenes serotype 4b (strain CLIP80459).